The following is a 97-amino-acid chain: UPF0298 protein MGAS9429_Spy0329 (97 aa).

Belongs to the UPF0298 family.

It localises to the cytoplasm. In Streptococcus pyogenes serotype M12 (strain MGAS9429), this protein is UPF0298 protein MGAS9429_Spy0329.